Consider the following 470-residue polypeptide: MGNREPLAAAGQGTAYSGYRLRDLQNVAPTNLEILRTGPGTPMGEYMRRYWQPVCLSQELTDVPKAIRILHEDLVAFRDRRGNVGVLHRKCAHRGASLEFGIVQERGIRCCYHGWHFDVDGSLLEAPAEPPDTKLKETVCQGAYPAFERNGLVFAYMGPADRRPEFPVFDGYVLPKGTRLIPFSNVFDCNWLQVYENQIDHYHTALLHNNMTVAGVDAKLADGATLQGGFGEMPIIDWHPTDDNNGMIFTAGRRLSDDEVWIRISQMGLPNWMQNAAIVAAAPQRHSGPAMSRWQVPVDDEHSIAFGWRHFNDEVDPEHRGREEECGVDKIDFLIGQTRHRPYEETQRVPGDYEAIVSQGPIALHGLEHPGRSDVGVYMCRSLLRDAVAGKAPPDPVRVKAGSTDGQTLPRYASDSRLRIRRRPSREADSDVIRKAAHQVFAIMKECDELPVVQRRPHVLRRLDEIEASL.

A Rieske domain is found at 51–155; it reads WQPVCLSQEL…AFERNGLVFA (105 aa). [2Fe-2S] cluster is bound by residues C91, H93, C110, and H113.

Belongs to the bacterial ring-hydroxylating dioxygenase alpha subunit family. In terms of assembly, this two-component enzyme is composed of an oxygenase (MdpJ) and a reductase (MdpK). [2Fe-2S] cluster serves as cofactor.

The enzyme catalyses tert-butanol + NADPH + O2 + H(+) = 2-methylpropane-1,2-diol + NADP(+) + H2O. It catalyses the reaction 2-methylbutan-2-ol + NADPH + O2 + H(+) = 3-hydroxy-3-methylbut-1-ene + NADP(+) + 2 H2O. Oxygenase component of a two-component system involved in the degradation of tertiary alcohols such as tert-butyl alcohol (TBA) and tert-amyl alcohol (TAA). In the presence of TBA, catalyzes the hydroxylation of TBA to 2-methylpropane-1,2-diol. In the presence of TAA, functions as a desaturase, enabling the degradation of TAA and resulting in the formation of the hemiterpene 3-hydroxy-3-methylbut-1-ene. The specificity of the catalysis depends strongly on the molecule structure of the substrate, allowing either hydroxylation or desaturation reactions. Also catalyzes the desaturation of the tertiary alcohol 3-methyl-3-pentanol (a C6 homolog of TBA and TAA) to 3-methyl-1-penten-3-ol, with lower efficiency. In addition, can transform some secondary alcohols, including the hydroxylation of 2-propanol to 1,2-propanediol, and the desaturation of 2-butanol, 3-methyl-2-butanol and 3-pentanol. In Aquincola tertiaricarbonis, this protein is Tert-butanol monooxygenase / tert-amyl alcohol desaturase oxygenase subunit.